A 944-amino-acid polypeptide reads, in one-letter code: Protein translocase subunit SecA (944 aa).

ATP contacts are provided by residues Gln-77, Gly-95–Thr-99, and Asp-484. Residues Glu-920–Gly-944 are disordered. Residues Pro-933–Gly-944 are compositionally biased toward basic and acidic residues.

Belongs to the SecA family. In terms of assembly, monomer and homodimer. Part of the essential Sec protein translocation apparatus which comprises SecA, SecYEG and auxiliary proteins SecDF. Other proteins may also be involved.

It is found in the cell membrane. Its subcellular location is the cytoplasm. It carries out the reaction ATP + H2O + cellular proteinSide 1 = ADP + phosphate + cellular proteinSide 2.. In terms of biological role, part of the Sec protein translocase complex. Interacts with the SecYEG preprotein conducting channel. Has a central role in coupling the hydrolysis of ATP to the transfer of proteins into and across the cell membrane, serving as an ATP-driven molecular motor driving the stepwise translocation of polypeptide chains across the membrane. The polypeptide is Protein translocase subunit SecA (Mycoplasma capricolum subsp. capricolum (strain California kid / ATCC 27343 / NCTC 10154)).